The primary structure comprises 353 residues: Quinolinate synthase (353 aa).

Iminosuccinate is bound by residues His-47 and Ser-68. Cys-113 is a binding site for [4Fe-4S] cluster. Residues 139-141 (YAN) and Ser-156 contribute to the iminosuccinate site. [4Fe-4S] cluster is bound at residue Cys-200. Iminosuccinate-binding positions include 226–228 (HPE) and Thr-243. A [4Fe-4S] cluster-binding site is contributed by Cys-297.

It belongs to the quinolinate synthase family. Type 1 subfamily. [4Fe-4S] cluster is required as a cofactor.

Its subcellular location is the cytoplasm. It catalyses the reaction iminosuccinate + dihydroxyacetone phosphate = quinolinate + phosphate + 2 H2O + H(+). The protein operates within cofactor biosynthesis; NAD(+) biosynthesis; quinolinate from iminoaspartate: step 1/1. Its function is as follows. Catalyzes the condensation of iminoaspartate with dihydroxyacetone phosphate to form quinolinate. In Serratia proteamaculans (strain 568), this protein is Quinolinate synthase.